The sequence spans 351 residues: MKKSTLALMMMGFVASTATQAAEVYNKNANKLDVYGKIKAMHYFSDYDSKDGDQTYVRFGIKGETQINEDLTGYGRWESEFSGNKTESDSSQQKTRLAFAGVKLKNYGSFDYGRNLGALYDVEAWTDMFPEFGGDSSAQTDNFMTKRASGLATYRNTDFFGLVDGLDLTLQYQGKNEGREAKKQNGDGVGTSLSYDFGGTDFAVSAAYTSSDRTNDQNLLARAQGSKAEAWATGLKYDANNIYLATMYSETRKMTPISGGFANKAQNFEAVAQYQFDFGLRPSLGYVLSKGKDIEGVGSEDLVNYIDVGLTYYFNKNMNAFVDYKINQLKSDNKLGINDDDIVALGMTYQF.

Residues 1–21 (MKKSTLALMMMGFVASTATQA) form the signal peptide.

Belongs to the Gram-negative porin family. In terms of assembly, homotrimer.

The protein resides in the cell outer membrane. Uptake of inorganic phosphate, phosphorylated compounds, and some other negatively charged solutes. The sequence is that of Outer membrane porin PhoE (phoE) from Klebsiella pneumoniae.